We begin with the raw amino-acid sequence, 135 residues long: S-protein homolog 29 (135 aa).

Residues 1–24 (MKNSSKIFVVLSIILFYVISSCHG) form the signal peptide. A glycan (N-linked (GlcNAc...) asparagine) is linked at asparagine 110.

This sequence belongs to the plant self-incompatibility (S1) protein family.

Its subcellular location is the secreted. The sequence is that of S-protein homolog 29 from Arabidopsis thaliana (Mouse-ear cress).